Reading from the N-terminus, the 468-residue chain is Histone acetyltransferase type B catalytic subunit (468 aa).

Residue Ser8 is modified to Phosphoserine. Interaction with histone H4 N-terminus regions lie at residues 44–46 (EEE) and 208–210 (YKF). Acetyl-CoA contacts are provided by residues 248–250 (FLI) and 255–261 (QKSGNGS). The Proton donor/acceptor role is filled by Glu283. A disordered region spans residues 442 to 468 (SSNLKRKLDDDENTEGSSSKKARVEDA).

The protein belongs to the HAT1 family. Component of the HAT-B complex composed of at least HAT1 and HAT2. The HAT-B complex binds to histone H4 tail. In the nucleus, interacts with GSK1 and SSB1. In the cytoplasm, interacts with ATG3 and ATG9. Post-translationally, phosphorylated at Ser-8 by GSK1 in the nucleus which impairs its translocation to the cytoplasm through interfering the interaction between HAT1 and SSB1. Dephosphorylation under nutrient starvation conditions promotes the interaction between HAT1 and SSB1 and results in the translocation of HAT1 from the nucleus to the cytoplasm in order to acetylate ATG3 and ATG9.

The protein resides in the nucleus. It is found in the cytoplasm. The protein localises to the preautophagosomal structure. It carries out the reaction L-lysyl-[protein] + acetyl-CoA = N(6)-acetyl-L-lysyl-[protein] + CoA + H(+). In terms of biological role, catalytic component of the histone acetylase B (HAT-B) complex. Has intrinsic substrate specificity that modifies lysine in recognition sequence GXGKXG. Involved in DNA double-strand break repair. Required for appressorium turgor pressure, autophagy and conidial nuclear degradation. During the germination process and upon starvation conditions, translocates from the nucleus to the cytoplasm where it acetylates ATG3 at 'lys-262' and 'Lys-267', thus influencing autophagy through controlling ATG3-ATG8 interaction. Also acetylates ATG9 at 'Lys-621' to regulate ATG9 binding to vesicles, which is also important for autophagy and pathogenicity. The protein is Histone acetyltransferase type B catalytic subunit of Pyricularia oryzae (strain 70-15 / ATCC MYA-4617 / FGSC 8958) (Rice blast fungus).